Here is a 111-residue protein sequence, read N- to C-terminus: Ig kappa chain V-III region PC 7769 (111 aa).

Positions 1 to 23 (DIVLTQSPASLAVSLGQRATISC) are framework-1. An intrachain disulfide couples C23 to C92. A complementarity-determining-1 region spans residues 24-38 (KASQSVDYDGDSYMN). Residues 39–53 (WYQQKPGQPPKVLIF) form a framework-2 region. Residues 54–60 (AASNLES) are complementarity-determining-2. Residues 61–92 (GIPARFSGSGSGTDFTLNIHPVEEEDAATYYC) are framework-3. A complementarity-determining-3 region spans residues 93–101 (QQSNEDPWT). Residues 102 to 111 (FGSGTKLEIK) are framework-4.

The chain is Ig kappa chain V-III region PC 7769 from Mus musculus (Mouse).